A 207-amino-acid chain; its full sequence is Ribosomal RNA small subunit methyltransferase G (207 aa).

S-adenosyl-L-methionine is bound by residues Gly73, Leu78, 124–125 (VE), and Arg139.

It belongs to the methyltransferase superfamily. RNA methyltransferase RsmG family.

The protein localises to the cytoplasm. The catalysed reaction is guanosine(527) in 16S rRNA + S-adenosyl-L-methionine = N(7)-methylguanosine(527) in 16S rRNA + S-adenosyl-L-homocysteine. In terms of biological role, specifically methylates the N7 position of guanine in position 527 of 16S rRNA. The polypeptide is Ribosomal RNA small subunit methyltransferase G (Salmonella agona (strain SL483)).